A 515-amino-acid chain; its full sequence is uncharacterized protein (515 aa).

The interval 146–171 is disordered; that stretch reads SSEVDRNSETEGTREENSNTSDWDEQ. Positions 148-162 are enriched in basic and acidic residues; that stretch reads EVDRNSETEGTREEN.

The protein resides in the cytoplasm. It localises to the nucleus. This is an uncharacterized protein from Schizosaccharomyces pombe (strain 972 / ATCC 24843) (Fission yeast).